Here is a 177-residue protein sequence, read N- to C-terminus: PBAN-type neuropeptides (177 aa).

Positions 1 to 23 are cleaved as a signal peptide; sequence MIVTGNPVCAIALLLCLVFRASG. Positions 24-54 are excised as a propeptide; the sequence is EYELEMSSGGSNDGRSPSNDFGSCTDGKCTK. The interval 28–73 is disordered; sequence EMSSGGSNDGRSPSNDFGSCTDGKCTKRTTTTQESGISSGMWFGPR. Positions 31-45 are enriched in polar residues; it reads SGGSNDGRSPSNDFG. A compositionally biased stretch (low complexity) spans 47-59; the sequence is CTDGKCTKRTTTT. Residue Leu-74 is modified to Leucine amide. A propeptide spanning residues 78–113 is cleaved from the precursor; sequence HKSNEKQQINPEIEMLVNALDQPGMRWTVITIPANE. A leucine amide mark is found at Leu-124, Leu-154, and Leu-166. Residues 169–177 constitute a propeptide that is removed on maturation; that stretch reads QSRSVSRKI.

Belongs to the pyrokinin family. In terms of tissue distribution, pyrokinins (PK) 1 to 4 are expressed in the retrocerebral complex. PK 1 is expressed in central brain, anntennal lobes and abominal ganglia. PK 2 is expressed in optical lobes and in gnathal, thoracic and abdominal ganglia. PK 3 is expressed in optical lobes and in thoracic and abdominal ganglia (at protein level).

Its subcellular location is the secreted. In terms of biological role, pyrokinins mediate visceral muscle contractile activity (myotropic activity). The chain is PBAN-type neuropeptides from Camponotus floridanus (Florida carpenter ant).